Consider the following 353-residue polypeptide: G-protein complex alpha subunit gpaA (353 aa).

Residues 1–25 (MGCGMSTEDKEGKARNEEIENQLKR) form a disordered region. Over residues 7–25 (TEDKEGKARNEEIENQLKR) the composition is skewed to basic and acidic residues. In terms of domain architecture, G-alpha spans 32–353 (NEIKMLLLGA…QENLRLCGLI (322 aa)). The tract at residues 35-48 (KMLLLGAGESGKST) is G1 motif. The a divalent metal cation site is built by Ser47 and Thr181. A G2 motif region spans residues 173-181 (DVLRSRVKT). Residues 196-205 (YRMFDVGGQR) form a G3 motif region. A G4 motif region spans residues 265–272 (ILFLNKID). The tract at residues 323 to 328 (TCATDT) is G5 motif.

Belongs to the G-alpha family. G(q) subfamily. As to quaternary structure, g proteins are composed of 3 units; alpha, beta and gamma. The alpha chain contains the guanine nucleotide binding site. Interacts with gprM.

G-protein complex alpha subunit that plays a role in conidiation and regulation of the biosynthesis of secondary metabolites such as dihydroxynaphthalene (DHN)-melanin, via interaction with the G protein-coupled receptor gprM. The protein is G-protein complex alpha subunit gpaA of Aspergillus fumigatus (strain CBS 144.89 / FGSC A1163 / CEA10) (Neosartorya fumigata).